The chain runs to 379 residues: tRNA(Met) cytidine acetate ligase (379 aa).

ATP-binding positions include 7 to 20, Gly-100, Asn-153, and Arg-178; that span reads ITEY…HQYH.

It belongs to the TmcAL family.

It is found in the cytoplasm. It catalyses the reaction cytidine(34) in elongator tRNA(Met) + acetate + ATP = N(4)-acetylcytidine(34) in elongator tRNA(Met) + AMP + diphosphate. Functionally, catalyzes the formation of N(4)-acetylcytidine (ac(4)C) at the wobble position of elongator tRNA(Met), using acetate and ATP as substrates. First activates an acetate ion to form acetyladenylate (Ac-AMP) and then transfers the acetyl group to tRNA to form ac(4)C34. The chain is tRNA(Met) cytidine acetate ligase from Staphylococcus aureus (strain MRSA252).